The chain runs to 326 residues: mRNA decay activator protein ZFP36 (326 aa).

The necessary for nuclear export stretch occupies residues 1-15; the sequence is MDLTAIYESLLSLSP. A necessary and sufficient for the association with mRNA decay enzymes and mRNA decay activation region spans residues 1–100; sequence MDLTAIYESL…PTSPTATSTT (100 aa). Necessary for localization of ARE-containing mRNAs to processing bodies (PBs) stretches follow at residues 1–174 and 100–326; these read MDLT…DLAA and TPSR…SVSE. Positions 13–66 are disordered; that stretch reads LSPDVPVPSDHGGTESSPGWGSSGPWSLSPSDSSPSGVTSRLPGRSTSLVEGRS. Low complexity predominate over residues 28 to 49; that stretch reads SSPGWGSSGPWSLSPSDSSPSG. Phosphoserine; by MAPKAPK2 is present on Ser60. Ser66 carries the post-translational modification Phosphoserine. A P-P-P-P-G repeat occupies 71–75; it reads PPPPG. Positions 78–102 are disordered; the sequence is PLAPRLGPELSPSPTSPTATSTTPS. Phosphoserine occurs at positions 88 and 90. Position 92 is a phosphothreonine (Thr92). Ser93 is subject to Phosphoserine. The segment at 95 to 168 is necessary for nuclear localization; it reads TATSTTPSRY…GSRCHFIHNP (74 aa). The segment at 97-173 is necessary for RNA-binding; it reads TSTTPSRYKT…FIHNPSEDLA (77 aa). C3H1-type zinc fingers lie at residues 103–131 and 141–169; these read RYKT…HGLG and KYKT…HNPS. A necessary for interaction with PABPN1 region spans residues 103–194; sequence RYKTELCRTF…ISFSGLPSGR (92 aa). Ser169 bears the Phosphoserine mark. The tract at residues 174-326 is necessary for mRNA decay activation; that stretch reads APGHPPVLRQ…PIFNRISVSE (153 aa). Disordered stretches follow at residues 175–245 and 273–292; these read PGHP…RRDP and SVQS…SSLG. Phosphoserine; by MAPKAPK2 is present on Ser186. Ser197 is modified (phosphoserine). The stretch at 198–202 is one P-P-P-P-G repeat; sequence PPPPG. Positions 204 to 216 are enriched in low complexity; that stretch reads AGPSLSSSSFSPS. Residue Ser218 is modified to Phosphoserine. The stretch at 219-223 is one P-P-P-P-G repeat; the sequence is PPPPG. Ser228 is subject to Phosphoserine; by MAPK1; in vitro. Phosphoserine is present on residues Ser276, Ser296, and Ser323. Positions 312 to 326 are interaction with CNOT1; the sequence is APRRLPIFNRISVSE.

Associates with cytoplasmic CCR4-NOT and PAN2-PAN3 deadenylase complexes to trigger ARE-containing mRNA deadenylation and decay processes. Part of a mRNA decay activation complex at least composed of poly(A)-specific exoribonucleases CNOT6, EXOSC2 and XRN1 and mRNA-decapping enzymes DCP1A and DCP2. Associates with the RNA exosome complex. Interacts (via phosphorylated form) with 14-3-3 proteins; these interactions promote exclusion of ZFP36 from cytoplasmic stress granules in response to arsenite treatment in a MAPKAPK2-dependent manner and does not prevent CCR4-NOT deadenylase complex recruitment or ZFP36-induced ARE-containing mRNA deadenylation and decay processes. Interacts with 14-3-3 proteins; these interactions occur in response to rapamycin in an Akt-dependent manner. Interacts with AGO2 and AGO4. Interacts (via C-terminus) with CNOT1; this interaction occurs in a RNA-independent manner and induces mRNA deadenylation. Interacts (via N-terminus) with CNOT6. Interacts with CNOT6L. Interacts (via C-terminus) with CNOT7; this interaction occurs in a RNA-independent manner, induces mRNA deadenylation and is inhibited in a phosphorylation MAPKAPK2-dependent manner. Interacts (via unphosphorylated form) with CNOT8; this interaction occurs in a RNA-independent manner and is inhibited in a phosphorylation MAPKAPK2-dependent manner. Interacts with DCP1A. Interacts (via N-terminus) with DCP2. Interacts with EDC3. Interacts (via N-terminus) with EXOSC2. Interacts with heat shock 70 kDa proteins. Interacts with KHSRP; this interaction increases upon cytokine-induced treatment. Interacts with MAP3K4; this interaction enhances the association with SH3KBP1/CIN85. Interacts with MAPKAPK2; this interaction occurs upon skeletal muscle satellite cell activation. Interacts with NCL. Interacts with NUP214; this interaction increases upon lipopolysaccharide (LPS) stimulation. Interacts with PABPC1; this interaction occurs in a RNA-dependent manner. Interacts (via hypophosphorylated form) with PABPN1 (via RRM domain and C-terminal arginine-rich region); this interaction occurs in the nucleus in a RNA-independent manner, decreases in presence of single-stranded poly(A) RNA-oligomer and in a p38 MAPK-dependent-manner and inhibits nuclear poly(A) tail synthesis. Interacts with PAN2. Interacts (via C3H1-type zinc finger domains) with PKM. Interacts (via C3H1-type zinc finger domains) with nuclear RNA poly(A) polymerase. Interacts with PPP2CA; this interaction occurs in LPS-stimulated cells and induces ZFP36 dephosphorylation, and hence may promote ARE-containing mRNAs decay. Interacts (via C-terminus) with PRR5L (via C-terminus); this interaction may accelerate ZFP36-mediated mRNA decay during stress. Interacts (via C-terminus) with SFN; this interaction occurs in a phosphorylation-dependent manner. Interacts (via extreme C-terminal region) with SH3KBP1/CIN85 (via SH3 domains); this interaction enhances MAP3K4-induced phosphorylation of ZFP36 at Ser-66 and Ser-93 and does not alter neither ZFP36 binding to ARE-containing transcripts nor TNF-alpha mRNA decay. Interacts with XRN1. Interacts (via C-terminus and Ser-186 phosphorylated form) with YWHAB; this interaction occurs in a p38/MAPKAPK2-dependent manner, increases cytoplasmic localization of ZFP36 and protects ZFP36 from Ser-186 dephosphorylation by serine/threonine phosphatase 2A, and hence may be crucial for stabilizing ARE-containing mRNAs. Interacts (via phosphorylated form) with YWHAE. Interacts (via C-terminus) with YWHAG; this interaction occurs in a phosphorylation-dependent manner. Interacts with YWHAH; this interaction occurs in a phosphorylation-dependent manner. Interacts with YWHAQ; this interaction occurs in a phosphorylation-dependent manner. Interacts with (via C-terminus) YWHAZ; this interaction occurs in a phosphorylation-dependent manner. Interacts (via P-P-P-P-G repeats) with GIGYF2; the interaction is direct. As to quaternary structure, (Microbial infection) Interacts (via C-terminus) with HTLV-1 TAX (via C-terminus); this interaction inhibits HTLV-1 TAX to transactivate viral long terminal repeat (LTR) promoter. Post-translationally, phosphorylated. Phosphorylation at serine and/or threonine residues occurs in a p38 MAPK- and MAPKAPK2-dependent manner. Phosphorylated by MAPKAPK2 at Ser-60 and Ser-186; phosphorylation increases its stability and cytoplasmic localization, promotes binding to 14-3-3 adapter proteins and inhibits the recruitment of cytoplasmic CCR4-NOT and PAN2-PAN3 deadenylase complexes to the mRNA decay machinery, thereby inhibiting ZFP36-induced ARE-containing mRNA deadenylation and decay processes. Phosphorylation by MAPKAPK2 does not impair ARE-containing RNA-binding. Phosphorylated in a MAPKAPK2- and p38 MAPK-dependent manner upon skeletal muscle satellite cell activation; this phosphorylation inhibits ZFP36-mediated mRNA decay activity, and hence stabilizes MYOD1 mRNA. Phosphorylated by MAPK1 upon mitogen stimulation. Phosphorylated at Ser-66 and Ser-93; these phosphorylations increase in a SH3KBP1-dependent manner. Phosphorylated at serine and threonine residues in a pyruvate kinase PKM- and p38 MAPK-dependent manner. Phosphorylation at Ser-60 may participate in the PKM-mediated degradation of ZFP36 in a p38 MAPK-dependent manner. Dephosphorylated by serine/threonine phosphatase 2A at Ser-186. In terms of processing, ubiquitinated; pyruvate kinase (PKM)-dependent ubiquitination leads to proteasomal degradation through a p38 MAPK signaling pathway. In terms of tissue distribution, expressed in both basal and suprabasal epidermal layers. Expressed in epidermal keratinocytes. Expressed strongly in mature dendritic cells. Expressed in immature dendritic cells (at protein level).

It is found in the nucleus. The protein localises to the cytoplasm. It localises to the cytoplasmic granule. Its subcellular location is the P-body. Its function is as follows. Zinc-finger RNA-binding protein that destabilizes several cytoplasmic AU-rich element (ARE)-containing mRNA transcripts by promoting their poly(A) tail removal or deadenylation, and hence provide a mechanism for attenuating protein synthesis. Acts as an 3'-untranslated region (UTR) ARE mRNA-binding adapter protein to communicate signaling events to the mRNA decay machinery. Recruits deadenylase CNOT7 (and probably the CCR4-NOT complex) via association with CNOT1, and hence promotes ARE-mediated mRNA deadenylation. Functions also by recruiting components of the cytoplasmic RNA decay machinery to the bound ARE-containing mRNAs. Self regulates by destabilizing its own mRNA. Binds to 3'-UTR ARE of numerous mRNAs and of its own mRNA. Plays a role in anti-inflammatory responses; suppresses tumor necrosis factor (TNF)-alpha production by stimulating ARE-mediated TNF-alpha mRNA decay and several other inflammatory ARE-containing mRNAs in interferon (IFN)- and/or lipopolysaccharide (LPS)-induced macrophages. Also plays a role in the regulation of dendritic cell maturation at the post-transcriptional level, and hence operates as part of a negative feedback loop to limit the inflammatory response. Promotes ARE-mediated mRNA decay of hypoxia-inducible factor HIF1A mRNA during the response of endothelial cells to hypoxia. Positively regulates early adipogenesis of preadipocytes by promoting ARE-mediated mRNA decay of immediate early genes (IEGs). Negatively regulates hematopoietic/erythroid cell differentiation by promoting ARE-mediated mRNA decay of the transcription factor STAT5B mRNA. Plays a role in maintaining skeletal muscle satellite cell quiescence by promoting ARE-mediated mRNA decay of the myogenic determination factor MYOD1 mRNA. Associates also with and regulates the expression of non-ARE-containing target mRNAs at the post-transcriptional level, such as MHC class I mRNAs. Participates in association with argonaute RISC catalytic components in the ARE-mediated mRNA decay mechanism; assists microRNA (miRNA) targeting ARE-containing mRNAs. May also play a role in the regulation of cytoplasmic mRNA decapping; enhances decapping of ARE-containing RNAs, in vitro. Involved in the delivery of target ARE-mRNAs to processing bodies (PBs). In addition to its cytosolic mRNA-decay function, affects nuclear pre-mRNA processing. Negatively regulates nuclear poly(A)-binding protein PABPN1-stimulated polyadenylation activity on ARE-containing pre-mRNA during LPS-stimulated macrophages. Also involved in the regulation of stress granule (SG) and P-body (PB) formation and fusion. Plays a role in the regulation of keratinocyte proliferation, differentiation and apoptosis. Plays a role as a tumor suppressor by inhibiting cell proliferation in breast cancer cells. Functionally, (Microbial infection) Negatively regulates HTLV-1 TAX-dependent transactivation of viral long terminal repeat (LTR) promoter. This is mRNA decay activator protein ZFP36 from Homo sapiens (Human).